A 1354-amino-acid chain; its full sequence is Rho-associated protein kinase 1 (1354 aa).

Ser2 is subject to N-acetylserine. Residues 76-338 (YEVVKVIGRG…VEEIKRHLFF (263 aa)) enclose the Protein kinase domain. ATP-binding positions include 82 to 90 (IGRGAFGEV) and Lys105. Residue Asp198 is the Proton acceptor of the active site. The AGC-kinase C-terminal domain maps to 341–409 (DQWAWETLRD…YSNRRYLPSA (69 aa)). The tract at residues 368 to 727 (FDDLEEDKGD…KKLKEEREAR (360 aa)) is interaction with FHOD1. Residues 422–692 (KSLQESLQKT…RLEQEVNEHK (271 aa)) adopt a coiled-coil conformation. Positions 479-556 (SAVSQIEKEK…LEEANDLLRT (78 aa)) constitute an REM-1 domain. The segment at 707–946 (EAKSVAMCEM…TVSRLEETNS (240 aa)) is SHROOM3 binding. In terms of domain architecture, RhoBD spans 949–1015 (TKDIEMLRKE…LAEIMNRKDF (67 aa)). The tract at residues 998-1010 (LKTQAVNKLAEIM) is RHOA binding. The stretch at 1011-1102 (NRKDFKIDRK…KLLDLSDSTS (92 aa)) forms a coiled coil. Residues Ser1105 and Ser1108 each carry the phosphoserine modification. The segment at 1115 to 1354 (NLPESRIEGW…VVKNTSGKTS (240 aa)) is auto-inhibitory. The PH domain occupies 1118 to 1317 (ESRIEGWLSV…WVTHLVKKIP (200 aa)). A Phorbol-ester/DAG-type zinc finger spans residues 1228 to 1283 (GHEFIPTLYHFPANCEACAKPLWHVFKPPPALECRRCHVKCHRDHLDKKEDLISPC). Phosphoserine is present on Ser1328. The disordered stretch occupies residues 1333 to 1354 (STRSTANQSFRKVVKNTSGKTS).

It belongs to the protein kinase superfamily. AGC Ser/Thr protein kinase family. As to quaternary structure, homodimer. Interacts with RHOA (activated by GTP), RHOB, RHOC, GEM, MYLC2B, RHOE, PPP1R12A, LIMK1, LIMK2, TSG101, CHORDC1, DAPK3, PFN1 and JIP3. Interacts with FHOD1 in a Src-dependent manner. Interacts with PTEN. Interacts with ITGB1BP1 (via N-terminus and PTB domain). Interacts with SHROOM3. It depends on Mg(2+) as a cofactor. Autophosphorylated on serine and threonine residues. In terms of processing, cleaved by caspase-3 during apoptosis. This leads to constitutive activation of the kinase and membrane blebbing. Highly expressed in brain, heart, lung, liver, stomach, spleen, kidney, testis, muscle, embryo and placenta.

It localises to the cytoplasm. The protein localises to the cytoskeleton. It is found in the microtubule organizing center. The protein resides in the centrosome. Its subcellular location is the centriole. It localises to the golgi apparatus membrane. The protein localises to the cell projection. It is found in the bleb. The protein resides in the cell membrane. Its subcellular location is the lamellipodium. It localises to the ruffle. The enzyme catalyses L-seryl-[protein] + ATP = O-phospho-L-seryl-[protein] + ADP + H(+). It carries out the reaction L-threonyl-[protein] + ATP = O-phospho-L-threonyl-[protein] + ADP + H(+). Its activity is regulated as follows. Activated by RHOA binding. Inhibited by Y-27632. In terms of biological role, protein kinase which is a key regulator of the actin cytoskeleton and cell polarity. Involved in regulation of smooth muscle contraction, actin cytoskeleton organization, stress fiber and focal adhesion formation, neurite retraction, cell adhesion and motility via phosphorylation of DAPK3, GFAP, LIMK1, LIMK2, MYL9/MLC2, TPPP, PFN1 and PPP1R12A. Phosphorylates FHOD1 and acts synergistically with it to promote SRC-dependent non-apoptotic plasma membrane blebbing. Phosphorylates JIP3 and regulates the recruitment of JNK to JIP3 upon UVB-induced stress. Acts as a suppressor of inflammatory cell migration by regulating PTEN phosphorylation and stability. Acts as a negative regulator of VEGF-induced angiogenic endothelial cell activation. Required for centrosome positioning and centrosome-dependent exit from mitosis. Plays a role in terminal erythroid differentiation. Inhibits podocyte motility via regulation of actin cytoskeletal dynamics and phosphorylation of CFL1. Promotes keratinocyte terminal differentiation. Involved in osteoblast compaction through the fibronectin fibrillogenesis cell-mediated matrix assembly process, essential for osteoblast mineralization. May regulate closure of the eyelids and ventral body wall by inducing the assembly of actomyosin bundles. This is Rho-associated protein kinase 1 (Rock1) from Mus musculus (Mouse).